We begin with the raw amino-acid sequence, 299 residues long: GTPase Era (299 aa).

Positions 5–175 constitute an Era-type G domain; it reads RSGFVCFVGR…TDVLAGKLPP (171 aa). Positions 13 to 20 are G1; sequence GRPNTGKS. 13 to 20 serves as a coordination point for GTP; the sequence is GRPNTGKS. The segment at 39-43 is G2; that stretch reads QTTRH. The G3 stretch occupies residues 60–63; it reads DTPG. GTP is bound by residues 60–64 and 124–127; these read DTPGL and TKID. The segment at 124-127 is G4; the sequence is TKID. The interval 154–156 is G5; the sequence is VSA. In terms of domain architecture, KH type-2 spans 206-285; it reads VRDELPHSLA…YLDLRVKIAK (80 aa).

It belongs to the TRAFAC class TrmE-Era-EngA-EngB-Septin-like GTPase superfamily. Era GTPase family. As to quaternary structure, monomer.

It localises to the cell envelope. The protein resides in the secreted. The protein localises to the cell wall. Functionally, exhibits GTPase activity. Binds RNA but is probably not involved in ribosome assembly in mycobacteria. The chain is GTPase Era from Mycobacterium sp. (strain JLS).